The sequence spans 313 residues: Ribosomal protein L11 methyltransferase (313 aa).

S-adenosyl-L-methionine is bound by residues Thr-163, Gly-184, Asp-206, and Asn-249.

Belongs to the methyltransferase superfamily. PrmA family.

It is found in the cytoplasm. The catalysed reaction is L-lysyl-[protein] + 3 S-adenosyl-L-methionine = N(6),N(6),N(6)-trimethyl-L-lysyl-[protein] + 3 S-adenosyl-L-homocysteine + 3 H(+). Functionally, methylates ribosomal protein L11. The sequence is that of Ribosomal protein L11 methyltransferase from Brevibacillus brevis (strain 47 / JCM 6285 / NBRC 100599).